We begin with the raw amino-acid sequence, 521 residues long: Protein disulfide-isomerase A5 (521 aa).

The signal sequence occupies residues 1 to 25; that stretch reads MARVVPAWLLLPLAVWVVLPTWLSS. Thioredoxin domains follow at residues 136 to 263, 274 to 386, and 387 to 508; these read FLKD…NPQP, ADEG…NPES, and PPPP…TLRE. 3 disulfide bridges follow: cysteine 184-cysteine 187, cysteine 307-cysteine 310, and cysteine 428-cysteine 431. The short motif at 518 to 521 is the Prevents secretion from ER element; it reads KEEL.

This sequence belongs to the protein disulfide isomerase family.

Its subcellular location is the endoplasmic reticulum lumen. The catalysed reaction is Catalyzes the rearrangement of -S-S- bonds in proteins.. This Bos taurus (Bovine) protein is Protein disulfide-isomerase A5 (PDIA5).